Here is a 458-residue protein sequence, read N- to C-terminus: MSLFRSRPAKIHFVGIGGIGMSGIAEVLLNLGYAVSGSDLKESEITRRLASLGGRVQRGHAAQHVEQVDVVVTSSAVRKDNPEVVEARRRKIPIIPRAEMLAELMRLKYGVAIAGSHGKTTTTSLAAHLLAHAGLDPTAVVGGKVNTFGSNAKLGRGDYMVVEADESDGSFLHIPPTIAIVTNIDPEHLDHWKTEEALRKGFLDFVNRVPFYGRAILCIDHPTVQSLLPEVESRYVTYGESHQADYRADGIEVSGHAVRFDAFRRDEPLGRFEVRLVGRHNALNALAVVAIADEMGVPADVTREALASFGGVQRRFTVRGEAGGVTVVDDYGHHPAEVKATLLGAREAFHRRVVCLFQPHRYTRTRDLLPEFATAFNDADVLLLTDIYAAGEEPIPGATSEALAEAIRACGHRDVSLVPRPELARAARQRVRPGDIVLTLGAGDITAAGPELLGLLEA.

Position 115–121 (115–121) interacts with ATP; sequence GSHGKTT.

It belongs to the MurCDEF family.

It is found in the cytoplasm. The enzyme catalyses UDP-N-acetyl-alpha-D-muramate + L-alanine + ATP = UDP-N-acetyl-alpha-D-muramoyl-L-alanine + ADP + phosphate + H(+). It functions in the pathway cell wall biogenesis; peptidoglycan biosynthesis. Cell wall formation. The polypeptide is UDP-N-acetylmuramate--L-alanine ligase (Anaeromyxobacter sp. (strain Fw109-5)).